A 486-amino-acid polypeptide reads, in one-letter code: Coronin-1B (486 aa).

Serine 2 carries the phosphoserine; by PKC modification. WD repeat units follow at residues 80 to 120 (GHTG…LTSP), 130 to 170 (GHTK…ELYR), 174 to 213 (LHPD…LVAE), 217 to 260 (AHEG…EPMA), and 265 to 305 (DSSN…PYIH). The segment at 404–444 (LKVSRRNVLSDSRPTSAARPAAPAPAAPAPAAAASSSLSGA) is disordered. Low complexity predominate over residues 432 to 444 (APAAAASSSLSGA). The stretch at 446-484 (EAGKLEEVMRELRALRALVKEQGERIGRLEEQLGRVENG) forms a coiled coil.

It belongs to the WD repeat coronin family. In terms of assembly, forms homooligomers, but does not form complexes with the other coronins. Interacts with Arp2/3 complex components, including ACTR2, ARPC1B and ARPC2. Binds actin. Phosphorylated in vivo by PKC in response to cholinergic stimulation. Phosphorylation on Ser-2 regulates the interaction with the Arp2/3 complex and cell motility in fibroblasts. Phosphorylation does not seem to affect subcellular location.

The protein localises to the cytoplasm. It is found in the cytoskeleton. Its subcellular location is the stress fiber. Regulates leading edge dynamics and cell motility in fibroblasts. May be involved in cytokinesis and signal transduction. The sequence is that of Coronin-1B (CORO1B) from Oryctolagus cuniculus (Rabbit).